The primary structure comprises 98 residues: mRNA interferase toxin MqsR (98 aa).

Might be a dimer. Also reported to be a monomer. Crystallizes as a heterotetramer with MqsA, MqsR-MqsA(2)-MqsR. Purifies as a possible heterohexamer of 2 MqsR dimers and 1 MqsA dimer. When the 2 dissociate the MsqR mRNA interferase becomes active.

In terms of biological role, toxic component of a type II toxin-antitoxin (TA) system. Plays a significant role in the control of biofilm formation and induction of persister cells in the presence of antibiotics. An mRNA interferase which has been reported to be translation-independent. It has also been reported to be translation-dependent. Cleavage has been reported to occur on either side of G in the sequence GCU. Also reported to cleave after C in GC(A/U) sequences. There are only 14 genes in E.coli W3110 (and probably also MG1655) that do not have a GCU sequence and thus are resistant to the mRNA interferase activity; among these is the gene for toxin GhoT. Overexpression of MqsR causes cessation of cell growth and inhibits cell proliferation via inhibition of translation as well as increasing persister cell formation; these effects are overcome by concomitant or subsequent expression of antitoxin MqsA. Cross-talk can occur between different TA systems. Ectopic expression of this toxin induces transcription of the relBEF TA system operon with specific cleavage of the relBEF mRNA produced. Regulates the expression of GhoT/GhoS, a type V TA system. Persistence depends on toxin GhoT activity, which MqsR controls at the post-transcriptional level by selectively degrading the antitoxin ghoS segment of the ghoST mRNA. Overexpression leads to a dramatic increase in tolerance to the antibiotic ofloxacin. This TA system mediates cell growth during bile acid deoxycholate stress by degrading mRNA for probable deoxycholate-binding protein YgiS; bile acid detergents such as deoxycholate are important for host defense against bacterial growth in the gall bladder and duodenum. Functionally, initially reported to act as a cotranscription factor with MqsA. Following further experiments, the MqsR-MqsA complex does not bind DNA and all reported data are actually due to a small fraction of free MqsA alone binding DNA. Addition of MqsR to a preformed MqsA-promoter DNA complex causes dissociation of the MqsA-DNA complex, probably causing derepression of MqsA-repressed transcripts. Does not bind DNA in the presence or absence of MqsA. In Escherichia coli (strain K12), this protein is mRNA interferase toxin MqsR.